Reading from the N-terminus, the 267-residue chain is uncharacterized protein (267 aa).

Positions 58–90 (RHTDDKQEKNQNEGEDNQKGENKTTDQQDGPKK) are disordered. 2 helical membrane passes run 101-121 (IYVL…LSQM) and 226-246 (GMTT…AWLG).

Its subcellular location is the membrane. This is an uncharacterized protein from Caenorhabditis elegans.